A 228-amino-acid polypeptide reads, in one-letter code: Geranylgeranylglyceryl phosphate synthase (228 aa).

K13 serves as a coordination point for sn-glycerol 1-phosphate. D15 and T41 together coordinate Mg(2+). Sn-glycerol 1-phosphate is bound by residues Y159 to G164, G189, and G209 to N210.

This sequence belongs to the GGGP/HepGP synthase family. Group I subfamily. Mg(2+) serves as cofactor.

The protein localises to the cytoplasm. The enzyme catalyses sn-glycerol 1-phosphate + (2E,6E,10E)-geranylgeranyl diphosphate = sn-3-O-(geranylgeranyl)glycerol 1-phosphate + diphosphate. The protein operates within membrane lipid metabolism; glycerophospholipid metabolism. Functionally, prenyltransferase that catalyzes the transfer of the geranylgeranyl moiety of geranylgeranyl diphosphate (GGPP) to the C3 hydroxyl of sn-glycerol-1-phosphate (G1P). This reaction is the first ether-bond-formation step in the biosynthesis of archaeal membrane lipids. This is Geranylgeranylglyceryl phosphate synthase from Methanosphaerula palustris (strain ATCC BAA-1556 / DSM 19958 / E1-9c).